The sequence spans 485 residues: Cysteine--tRNA ligase (485 aa).

Cys27 lines the Zn(2+) pocket. The 'HIGH' region motif lies at 29–39; that stretch reads ITAYDLCHIGH. Cys208, His233, and Glu237 together coordinate Zn(2+). Residues 265–269 carry the 'KMSKS' region motif; it reads KMSKS. Residue Lys268 participates in ATP binding.

Belongs to the class-I aminoacyl-tRNA synthetase family. In terms of assembly, monomer. Zn(2+) serves as cofactor.

It is found in the cytoplasm. The enzyme catalyses tRNA(Cys) + L-cysteine + ATP = L-cysteinyl-tRNA(Cys) + AMP + diphosphate. This chain is Cysteine--tRNA ligase, found in Maridesulfovibrio salexigens (strain ATCC 14822 / DSM 2638 / NCIMB 8403 / VKM B-1763) (Desulfovibrio salexigens).